The chain runs to 333 residues: Tubulin alpha chain (333 aa).

The GTP site is built by S48, G52, T53, T88, N115, and N137.

This sequence belongs to the tubulin family. Dimer of alpha and beta chains. A typical microtubule is a hollow water-filled tube with an outer diameter of 25 nm and an inner diameter of 15 nM. Alpha-beta heterodimers associate head-to-tail to form protofilaments running lengthwise along the microtubule wall with the beta-tubulin subunit facing the microtubule plus end conferring a structural polarity. Microtubules usually have 13 protofilaments but different protofilament numbers can be found in some organisms and specialized cells. Mg(2+) serves as cofactor. Undergoes a tyrosination/detyrosination cycle, the cyclic removal and re-addition of a C-terminal tyrosine residue by the enzymes tubulin tyrosine carboxypeptidase (TTCP) and tubulin tyrosine ligase (TTL), respectively.

The protein localises to the cytoplasm. It localises to the cytoskeleton. It carries out the reaction GTP + H2O = GDP + phosphate + H(+). Its function is as follows. Tubulin is the major constituent of microtubules, a cylinder consisting of laterally associated linear protofilaments composed of alpha- and beta-tubulin heterodimers. Microtubules grow by the addition of GTP-tubulin dimers to the microtubule end, where a stabilizing cap forms. Below the cap, tubulin dimers are in GDP-bound state, owing to GTPase activity of alpha-tubulin. The protein is Tubulin alpha chain (tuba) of Dictyostelium purpureum (Slime mold).